The primary structure comprises 342 residues: uncharacterized protein (342 aa).

Residues 1-18 (MWKKLMLLLLMAIPLVSA) form the signal peptide.

This is an uncharacterized protein from Methanocaldococcus jannaschii (strain ATCC 43067 / DSM 2661 / JAL-1 / JCM 10045 / NBRC 100440) (Methanococcus jannaschii).